A 274-amino-acid chain; its full sequence is Cytochrome b-c1 complex subunit Rieske, mitochondrial (274 aa).

Positions 29 to 49 (XXXXXXXXTPEPPVLDPKRPI) are disordered. Residues 79-103 (SHTDIKVPDFSDYRRSEVLDKTKSS) are Mitochondrial matrix-facing. The chain crosses the membrane as a helical span at residues 104–140 (RESSDARKVFSYMVTATTAVGVTYAAKSIVTQFISSM). Topologically, residues 141-274 (SASADVLAMS…FLSDDMVVVG (134 aa)) are mitochondrial intermembrane. In terms of domain architecture, Rieske spans 187-272 (EAAVELSQLR…YEFLSDDMVV (86 aa)). [2Fe-2S] cluster is bound by residues Cys217, His219, Cys236, His239, and Ser241. Cys222 and Cys238 are disulfide-bonded.

The protein belongs to the Rieske iron-sulfur protein family. As to quaternary structure, component of the ubiquinol-cytochrome c oxidoreductase (cytochrome b-c1 complex, complex III, CIII), a multisubunit enzyme composed of 11 subunits. The complex is composed of 3 respiratory subunits cytochrome b, cytochrome c1 and Rieske protein UQCRFS1, 2 core protein subunits UQCRC1/QCR1 and UQCRC2/QCR2, and 6 low-molecular weight protein subunits UQCRH/QCR6, UQCRB/QCR7, UQCRQ/QCR8, UQCR10/QCR9, UQCR11/QCR10 and subunit 9, the cleavage product of Rieske protein UQCRFS1. The complex exists as an obligatory dimer and forms supercomplexes (SCs) in the inner mitochondrial membrane with NADH-ubiquinone oxidoreductase (complex I, CI) and cytochrome c oxidase (complex IV, CIV), resulting in different assemblies (supercomplex SCI(1)III(2)IV(1) and megacomplex MCI(2)III(2)IV(2)). Incorporation of the Rieske protein UQCRFS1 is the penultimate step in complex III assembly. Interacts with TTC19, which is involved in the clearance of UQCRFS1 fragments. In terms of assembly, component of the ubiquinol-cytochrome c oxidoreductase (cytochrome b-c1 complex, complex III, CIII). Subunit 9 corresponds to the mitochondrial targeting sequence (MTS) of Rieske protein UQCRFS1. It is retained after processing and incorporated inside complex III, where it remains bound to the complex and localizes between the 2 core subunits UQCRC1/QCR1 and UQCRC2/QCR2. [2Fe-2S] cluster serves as cofactor. In terms of processing, proteolytic processing is necessary for the correct insertion of UQCRFS1 in the complex III dimer. Several fragments are generated during UQCRFS1 insertion, most probably due to the endogenous matrix-processing peptidase (MPP) activity of the 2 core protein subunits UQCRC1/QCR1 and UQCRC2/QCR2, which are homologous to the 2 mitochondrial-processing peptidase (MPP) subunits beta-MPP and alpha-MPP respectively. The action of the protease is also necessary for the clearance of the UQCRFS1 fragments.

The protein localises to the mitochondrion inner membrane. The catalysed reaction is a quinol + 2 Fe(III)-[cytochrome c](out) = a quinone + 2 Fe(II)-[cytochrome c](out) + 2 H(+)(out). Functionally, component of the ubiquinol-cytochrome c oxidoreductase, a multisubunit transmembrane complex that is part of the mitochondrial electron transport chain which drives oxidative phosphorylation. The respiratory chain contains 3 multisubunit complexes succinate dehydrogenase (complex II, CII), ubiquinol-cytochrome c oxidoreductase (cytochrome b-c1 complex, complex III, CIII) and cytochrome c oxidase (complex IV, CIV), that cooperate to transfer electrons derived from NADH and succinate to molecular oxygen, creating an electrochemical gradient over the inner membrane that drives transmembrane transport and the ATP synthase. The cytochrome b-c1 complex catalyzes electron transfer from ubiquinol to cytochrome c, linking this redox reaction to translocation of protons across the mitochondrial inner membrane, with protons being carried across the membrane as hydrogens on the quinol. In the process called Q cycle, 2 protons are consumed from the matrix, 4 protons are released into the intermembrane space and 2 electrons are passed to cytochrome c. The Rieske protein is a catalytic core subunit containing a [2Fe-2S] iron-sulfur cluster. It cycles between 2 conformational states during catalysis to transfer electrons from the quinol bound in the Q(0) site in cytochrome b to cytochrome c1. Incorporation of UQCRFS1 is the penultimate step in complex III assembly. Component of the ubiquinol-cytochrome c oxidoreductase (cytochrome b-c1 complex, complex III, CIII). UQCRFS1 undergoes proteolytic processing once it is incorporated in the complex III dimer. One of the fragments, called subunit 9, corresponds to its mitochondrial targeting sequence (MTS). The proteolytic processing is necessary for the correct insertion of UQCRFS1 in the complex III dimer, but the persistence of UQCRFS1-derived fragments may prevent newly imported UQCRFS1 to be processed and assembled into complex III and is detrimental for the complex III structure and function. The sequence is that of Cytochrome b-c1 complex subunit Rieske, mitochondrial (UQCRFS1) from Saimiri sciureus (Common squirrel monkey).